The chain runs to 481 residues: tRNA-2-methylthio-N(6)-dimethylallyladenosine synthase (481 aa).

One can recognise an MTTase N-terminal domain in the interval 24 to 140 (RKLFIESYGC…LPNLINEVEE (117 aa)). 6 residues coordinate [4Fe-4S] cluster: Cys-33, Cys-69, Cys-103, Cys-178, Cys-182, and Cys-185. The Radical SAM core domain occupies 164–410 (QSNGVSAFVS…VDLQQKHSKQ (247 aa)). Positions 413–476 (NSVIGTTVEV…SATLIGEPIG (64 aa)) constitute a TRAM domain.

Belongs to the methylthiotransferase family. MiaB subfamily. As to quaternary structure, monomer. [4Fe-4S] cluster serves as cofactor.

It is found in the cytoplasm. The catalysed reaction is N(6)-dimethylallyladenosine(37) in tRNA + (sulfur carrier)-SH + AH2 + 2 S-adenosyl-L-methionine = 2-methylsulfanyl-N(6)-dimethylallyladenosine(37) in tRNA + (sulfur carrier)-H + 5'-deoxyadenosine + L-methionine + A + S-adenosyl-L-homocysteine + 2 H(+). In terms of biological role, catalyzes the methylthiolation of N6-(dimethylallyl)adenosine (i(6)A), leading to the formation of 2-methylthio-N6-(dimethylallyl)adenosine (ms(2)i(6)A) at position 37 in tRNAs that read codons beginning with uridine. The chain is tRNA-2-methylthio-N(6)-dimethylallyladenosine synthase from Christiangramia forsetii (strain DSM 17595 / CGMCC 1.15422 / KT0803) (Gramella forsetii).